The sequence spans 191 residues: Dephospho-CoA kinase (191 aa).

The DPCK domain occupies 3-191; the sequence is AIGITGSYAS…NLIANLECRV (189 aa). Residue 11 to 16 participates in ATP binding; that stretch reads ASGKTF.

Belongs to the CoaE family.

It is found in the cytoplasm. The enzyme catalyses 3'-dephospho-CoA + ATP = ADP + CoA + H(+). It functions in the pathway cofactor biosynthesis; coenzyme A biosynthesis; CoA from (R)-pantothenate: step 5/5. Functionally, catalyzes the phosphorylation of the 3'-hydroxyl group of dephosphocoenzyme A to form coenzyme A. The polypeptide is Dephospho-CoA kinase (Rickettsia bellii (strain RML369-C)).